The sequence spans 1400 residues: DNA-directed RNA polymerase subunit beta' (1400 aa).

C70, C72, C85, and C88 together coordinate Zn(2+). Mg(2+) is bound by residues D460, D462, and D464. Zn(2+) contacts are provided by C814, C888, C895, and C898. The tract at residues 1367-1400 is disordered; the sequence is DRQAKRAEAQEGPSAEQATDNLAALLNAGFSSDE.

Belongs to the RNA polymerase beta' chain family. The RNAP catalytic core consists of 2 alpha, 1 beta, 1 beta' and 1 omega subunit. When a sigma factor is associated with the core the holoenzyme is formed, which can initiate transcription. Requires Mg(2+) as cofactor. The cofactor is Zn(2+).

The enzyme catalyses RNA(n) + a ribonucleoside 5'-triphosphate = RNA(n+1) + diphosphate. Its function is as follows. DNA-dependent RNA polymerase catalyzes the transcription of DNA into RNA using the four ribonucleoside triphosphates as substrates. This chain is DNA-directed RNA polymerase subunit beta', found in Vibrio campbellii (strain ATCC BAA-1116).